Here is a 290-residue protein sequence, read N- to C-terminus: UPF0761 membrane protein Ent638_4092 (290 aa).

Transmembrane regions (helical) follow at residues 44-64 (LLSL…FPMF), 104-124 (VGAC…DSAL), 140-160 (FAVY…SLAI), 183-203 (IFPL…VPTL), 210-230 (AIVG…GFAL), and 244-264 (VLAV…IVLL).

It belongs to the UPF0761 family.

The protein localises to the cell inner membrane. The chain is UPF0761 membrane protein Ent638_4092 from Enterobacter sp. (strain 638).